The primary structure comprises 876 residues: Phosphoenolpyruvate carboxylase (876 aa).

Residues H138 and K543 contribute to the active site.

This sequence belongs to the PEPCase type 1 family. Mg(2+) serves as cofactor.

The catalysed reaction is oxaloacetate + phosphate = phosphoenolpyruvate + hydrogencarbonate. Forms oxaloacetate, a four-carbon dicarboxylic acid source for the tricarboxylic acid cycle. In Pseudomonas fluorescens (strain ATCC BAA-477 / NRRL B-23932 / Pf-5), this protein is Phosphoenolpyruvate carboxylase.